A 230-amino-acid polypeptide reads, in one-letter code: NAD-dependent protein deacylase 1 (230 aa).

The Deacetylase sirtuin-type domain maps to 1–226; it reads MESGIPTYRE…SHLSAFLSRE (226 aa). Tyrosine 41 and arginine 44 together coordinate substrate. 75–78 is an NAD(+) binding site; it reads QNID. Histidine 93 (proton acceptor) is an active-site residue. The Zn(2+) site is built by cysteine 101, cysteine 104, cysteine 128, and cysteine 131. Residues 168-170, 194-196, and alanine 212 each bind NAD(+); these read GTS and NTV.

It belongs to the sirtuin family. Class III subfamily. It depends on Zn(2+) as a cofactor.

The protein resides in the cytoplasm. It carries out the reaction N(6)-acetyl-L-lysyl-[protein] + NAD(+) + H2O = 2''-O-acetyl-ADP-D-ribose + nicotinamide + L-lysyl-[protein]. It catalyses the reaction N(6)-succinyl-L-lysyl-[protein] + NAD(+) + H2O = 2''-O-succinyl-ADP-D-ribose + nicotinamide + L-lysyl-[protein]. In terms of biological role, NAD-dependent lysine deacetylase and desuccinylase that specifically removes acetyl and succinyl groups on target proteins. Modulates the activities of several proteins which are inactive in their acylated form. The protein is NAD-dependent protein deacylase 1 of Pseudomonas syringae pv. tomato (strain ATCC BAA-871 / DC3000).